The sequence spans 273 residues: Tyrosinase (273 aa).

The first 18 residues, 1 to 18 (MLLFTMGLLLAILQPSTG), serve as a signal peptide directing secretion. 3 N-linked (GlcNAc...) asparagine glycosylation sites follow: Asn-86, Asn-111, and Asn-161. 3 residues coordinate Cu cation: His-180, His-202, and His-211. N-linked (GlcNAc...) asparagine glycosylation occurs at Asn-230.

This sequence belongs to the tyrosinase family. Cu(2+) serves as cofactor.

The protein resides in the melanosome membrane. It is found in the melanosome. The catalysed reaction is 2 L-dopa + O2 = 2 L-dopaquinone + 2 H2O. It catalyses the reaction L-tyrosine + O2 = L-dopaquinone + H2O. This is a copper-containing oxidase that functions in the formation of pigments such as melanins and other polyphenolic compounds. Catalyzes the initial and rate limiting step in the cascade of reactions leading to melanin production from tyrosine. In addition to hydroxylating tyrosine to DOPA (3,4-dihydroxyphenylalanine), also catalyzes the oxidation of DOPA to DOPA-quinone, and possibly the oxidation of DHI (5,6-dihydroxyindole) to indole-5,6 quinone. This chain is Tyrosinase (TYR), found in Coturnix japonica (Japanese quail).